A 952-amino-acid polypeptide reads, in one-letter code: Isoleucine--tRNA ligase (952 aa).

The short motif at 58–68 (PYANGDIHIGH) is the 'HIGH' region element. Residue E576 participates in L-isoleucyl-5'-AMP binding. The 'KMSKS' region motif lies at 617 to 621 (KMSKS). K620 contributes to the ATP binding site. Zn(2+) is bound by residues C915, C918, C935, and C938.

Belongs to the class-I aminoacyl-tRNA synthetase family. IleS type 1 subfamily. Monomer. Zn(2+) serves as cofactor.

It is found in the cytoplasm. It catalyses the reaction tRNA(Ile) + L-isoleucine + ATP = L-isoleucyl-tRNA(Ile) + AMP + diphosphate. In terms of biological role, catalyzes the attachment of isoleucine to tRNA(Ile). As IleRS can inadvertently accommodate and process structurally similar amino acids such as valine, to avoid such errors it has two additional distinct tRNA(Ile)-dependent editing activities. One activity is designated as 'pretransfer' editing and involves the hydrolysis of activated Val-AMP. The other activity is designated 'posttransfer' editing and involves deacylation of mischarged Val-tRNA(Ile). This is Isoleucine--tRNA ligase from Aliivibrio fischeri (strain MJ11) (Vibrio fischeri).